Consider the following 242-residue polypeptide: C-reactive protein 1.4 (242 aa).

A signal peptide spans 1–24; sequence MKTFHGPTFGTAVFLYLLLFLTSA. A Pentraxin (PTX) domain is found at 30–241; sequence ITSKVKFPPS…GVVLSPNEIC (212 aa). Thr-60 and Tyr-63 together coordinate phosphocholine. 2 cysteine pairs are disulfide-bonded: Cys-62-Cys-125 and Cys-112-Cys-144. Positions 85 and 86 each coordinate Ca(2+). N-linked (GlcNAc...) asparagine glycosylation occurs at Asn-147. Residues Glu-168, Gln-169, Asp-170, and Gln-180 each coordinate Ca(2+). The cysteines at positions 207 and 241 are disulfide-linked.

This sequence belongs to the pentraxin family. Homopentamer. Pentraxin (or pentaxin) have a discoid arrangement of 5 non-covalently bound subunits. The cofactor is Ca(2+).

It is found in the secreted. In terms of biological role, might serve the role of immunoglobulins. This is C-reactive protein 1.4 from Limulus polyphemus (Atlantic horseshoe crab).